Here is an 817-residue protein sequence, read N- to C-terminus: LPS-assembly protein LptD (817 aa).

The signal sequence occupies residues 1–26 (MPALVVSPDLVRGAAGASAAPTPAPA). The segment at 1-101 (MPALVVSPDL…ARKPGSTEVR (101 aa)) is disordered. Over residues 13-90 (GAAGASAAPT…PAASASPADA (78 aa)) the composition is skewed to low complexity.

This sequence belongs to the LptD family. In terms of assembly, component of the lipopolysaccharide transport and assembly complex. Interacts with LptE and LptA.

The protein localises to the cell outer membrane. Its function is as follows. Together with LptE, is involved in the assembly of lipopolysaccharide (LPS) at the surface of the outer membrane. The sequence is that of LPS-assembly protein LptD from Azoarcus sp. (strain BH72).